The chain runs to 217 residues: MSLTMRIFTASRNGQRLFGSHGARLLAAQRAEPKDIVEVPKGYVYVNNKELSMEFADITDRAASTMFFGELLRGFAVTLAHIFKEPATINYPFEKGPLSPRFRGEHALRRYPSGEERCIACKLCEAICPAQAITIEAEERADGSRRTTRYDIDMTKCIYCGFCQEACPVDAIVEGPNFEFSTETHEELLYNKEKLLCNGDKWESEIASNLQADHLYR.

A mitochondrion-targeting transit peptide spans M1 to L26. 4Fe-4S ferredoxin-type domains follow at residues R109 to E138 and T148 to N177. [4Fe-4S] cluster contacts are provided by C118, C121, C124, C128, C157, C160, C163, and C167.

The protein belongs to the complex I 23 kDa subunit family. Part of the mitochondrial membrane respiratory chain NADH dehydrogenase (Complex I). This is a component of the iron-sulfur (IP) fragment of the enzyme. [4Fe-4S] cluster serves as cofactor. In terms of tissue distribution, expressed in muscles (at protein level).

It localises to the mitochondrion. It catalyses the reaction a ubiquinone + NADH + 5 H(+)(in) = a ubiquinol + NAD(+) + 4 H(+)(out). Functionally, core subunit of the mitochondrial membrane respiratory chain NADH dehydrogenase (Complex I) that is believed to belong to the minimal assembly required for catalysis. Complex I functions in the transfer of electrons from NADH to the respiratory chain. The immediate electron acceptor for the enzyme is believed to be ubiquinone. This Drosophila melanogaster (Fruit fly) protein is NADH dehydrogenase (ubiquinone) 23 kDa subunit.